Reading from the N-terminus, the 624-residue chain is DNA-directed RNA polymerase III subunit rpc-3 (624 aa).

Disordered stretches follow at residues 229–260 (KRKLAQNGGASKRRKLAVGNETNGAPEEEEDL) and 373–418 (LAPK…ARMS). Over residues 385–403 (DDSDDDEEDGDYSDSDEEM) the composition is skewed to acidic residues. Residues 551-572 (CYATMVHCLQVLEVRRQKDKDV) form a leucine-zipper region.

It belongs to the RNA polymerase beta chain family. In terms of assembly, component of the RNA polymerase III (Pol III) complex consisting of 17 subunits.

The protein localises to the nucleus. Functionally, DNA-dependent RNA polymerase catalyzes the transcription of DNA into RNA using the four ribonucleoside triphosphates as substrates. Specific core component of RNA polymerase III which synthesizes small RNAs, such as 5S rRNA and tRNAs. In Neurospora crassa (strain ATCC 24698 / 74-OR23-1A / CBS 708.71 / DSM 1257 / FGSC 987), this protein is DNA-directed RNA polymerase III subunit rpc-3 (rpc-82).